A 167-amino-acid chain; its full sequence is NAD(P)H-quinone oxidoreductase subunit J (167 aa).

It belongs to the complex I 30 kDa subunit family. In terms of assembly, NDH-1 can be composed of about 15 different subunits; different subcomplexes with different compositions have been identified which probably have different functions.

Its subcellular location is the cellular thylakoid membrane. It carries out the reaction a plastoquinone + NADH + (n+1) H(+)(in) = a plastoquinol + NAD(+) + n H(+)(out). It catalyses the reaction a plastoquinone + NADPH + (n+1) H(+)(in) = a plastoquinol + NADP(+) + n H(+)(out). Its function is as follows. NDH-1 shuttles electrons from an unknown electron donor, via FMN and iron-sulfur (Fe-S) centers, to quinones in the respiratory and/or the photosynthetic chain. The immediate electron acceptor for the enzyme in this species is believed to be plastoquinone. Couples the redox reaction to proton translocation, and thus conserves the redox energy in a proton gradient. Cyanobacterial NDH-1 also plays a role in inorganic carbon-concentration. In Microcystis aeruginosa (strain NIES-843 / IAM M-2473), this protein is NAD(P)H-quinone oxidoreductase subunit J.